The following is a 178-amino-acid chain: MKIPIILTLMLFSLGFIFGFISINNLSKINDKDLSNYIPNIQFNFPSILTNNLKVIFLMLAGSITFGLSTFINLIFNGFNVGVLIGSISLTNEPLKLITALILPHGIFEISAMLISAVAGFKIPYKVTLYLLDKKEKPLTEEDIKDFLKLSLISIILIVIAAFIEVYITPKIATYLLT.

Helical transmembrane passes span 3–23 (IPII…FISI), 56–76 (IFLM…NLIF), 101–121 (LILP…VAGF), and 150–170 (LSLI…YITP).

This sequence to M.jannaschii MJ0706 and Synechocystis PCC 6803 slr1478.

Its subcellular location is the cell membrane. This is an uncharacterized protein from Methanocaldococcus jannaschii (strain ATCC 43067 / DSM 2661 / JAL-1 / JCM 10045 / NBRC 100440) (Methanococcus jannaschii).